Here is a 490-residue protein sequence, read N- to C-terminus: Homoserine O-acetyltransferase (490 aa).

Positions 48–354 (NVILVCHALT…NSEYGHDAFL (307 aa)) constitute an AB hydrolase-1 domain. Serine 153 serves as the catalytic Nucleophile. Position 223 (arginine 223) interacts with substrate. Active-site residues include aspartate 317 and histidine 350. Aspartate 351 contributes to the substrate binding site. CBS domains are found at residues 377–434 (MSHT…ANSI) and 438–490 (MTKN…LYEK).

It belongs to the AB hydrolase superfamily. MetX family. In terms of assembly, homodimer.

The protein localises to the cytoplasm. The catalysed reaction is L-homoserine + acetyl-CoA = O-acetyl-L-homoserine + CoA. It participates in amino-acid biosynthesis; L-methionine biosynthesis via de novo pathway; O-acetyl-L-homoserine from L-homoserine: step 1/1. Transfers an acetyl group from acetyl-CoA to L-homoserine, forming acetyl-L-homoserine. This chain is Homoserine O-acetyltransferase, found in Methanosphaera stadtmanae (strain ATCC 43021 / DSM 3091 / JCM 11832 / MCB-3).